A 316-amino-acid polypeptide reads, in one-letter code: MSLMNWFEDKRRFGGLIGAFIEKATKGYIFSEREKDRYIKIDTTKGLWTRCDNCENMLYVRFLRQNKRICEECGYHLQMSSTERIELLIDRGTWYPMDEDMTARDVLKFSDEDSYKNRIAFYQKRTGLTDAIQTGIGQLNGIPIALGVMDFQFMGGSMGSVVGEKITRLIEYATRASMPLIIVCSSGGARMQEGTLSLMQMAKISSVLQIHQAQKRLLYIAILTYPTTGGVTASFGMLGDIIIAEPKAYIAFAGKRVIEQTLRQKIPDGFQVAESLFDHGLLDLIVPRNLLKGVLSEIFELYNAAPCKKFQNSFFK.

The CoA carboxyltransferase N-terminal domain maps to 47 to 316; that stretch reads LWTRCDNCEN…CKKFQNSFFK (270 aa). The Zn(2+) site is built by cysteine 51, cysteine 54, cysteine 70, and cysteine 73. Residues 51 to 73 form a C4-type zinc finger; it reads CDNCENMLYVRFLRQNKRICEEC.

Belongs to the AccD/PCCB family. Acetyl-CoA carboxylase is a heterohexamer composed of biotin carboxyl carrier protein, biotin carboxylase and 2 subunits each of ACCase subunit alpha and ACCase plastid-coded subunit beta (accD). It depends on Zn(2+) as a cofactor.

It localises to the plastid. It is found in the chloroplast stroma. The enzyme catalyses N(6)-carboxybiotinyl-L-lysyl-[protein] + acetyl-CoA = N(6)-biotinyl-L-lysyl-[protein] + malonyl-CoA. The protein operates within lipid metabolism; malonyl-CoA biosynthesis; malonyl-CoA from acetyl-CoA: step 1/1. In terms of biological role, component of the acetyl coenzyme A carboxylase (ACC) complex. Biotin carboxylase (BC) catalyzes the carboxylation of biotin on its carrier protein (BCCP) and then the CO(2) group is transferred by the transcarboxylase to acetyl-CoA to form malonyl-CoA. The protein is Acetyl-coenzyme A carboxylase carboxyl transferase subunit beta, chloroplastic of Marchantia polymorpha (Common liverwort).